Here is a 161-residue protein sequence, read N- to C-terminus: Small ribosomal subunit protein uS19 (161 aa).

Residues 1-19 show a composition bias toward basic residues; it reads MARQKKYSGKGGARKKNKQ. The tract at residues 1–26 is disordered; it reads MARQKKYSGKGGARKKNKQKQNVAPR.

It belongs to the universal ribosomal protein uS19 family.

In terms of biological role, protein S19 forms a complex with S13 that binds strongly to the 16S ribosomal RNA. This chain is Small ribosomal subunit protein uS19, found in Methanococcus maripaludis (strain C5 / ATCC BAA-1333).